An 887-amino-acid chain; its full sequence is Golgin IMH1 (887 aa).

Disordered stretches follow at residues 16 to 50 (LAKG…EELP), 142 to 214 (QESL…MKSQ), 240 to 301 (GASQ…SAGD), and 783 to 822 (LKMS…SISS). Basic and acidic residues-rich tracts occupy residues 37–50 (GRRE…EELP) and 145–210 (LEQR…HAAE). The stretch at 118-241 (AMLTEEIKRI…YKSTIQELGA (124 aa)) forms a coiled coil. The span at 240 to 254 (GASQATGEAQPSSEA) shows a compositional bias: polar residues. Residues 258 to 273 (RGKKGKGKRGKGKKRV) show a composition bias toward basic residues. Positions 299–788 (AGDEIIEAIE…LSTQLKMSKD (490 aa)) form a coiled coil. The span at 788–807 (DMSSQSRHSSRSGSLVSPSS) shows a compositional bias: low complexity. A compositionally biased stretch (polar residues) spans 808-822 (DNETGNSPRKISISS). The GRIP domain occupies 837 to 885 (EMESNEKLAYIRNVLLGFLEHREQRSQLLPVVSTLLQLSSHDEKRLLTS).

It is found in the cytoplasm. The protein resides in the golgi apparatus membrane. Functionally, involved in vesicular transport between an endosomal compartment and the Golgi apparatus. This is Golgin IMH1 (IMH1) from Eremothecium gossypii (strain ATCC 10895 / CBS 109.51 / FGSC 9923 / NRRL Y-1056) (Yeast).